The sequence spans 560 residues: DNA ligase B (560 aa).

The active-site N6-AMP-lysine intermediate is Lys124.

This sequence belongs to the NAD-dependent DNA ligase family. LigB subfamily.

It carries out the reaction NAD(+) + (deoxyribonucleotide)n-3'-hydroxyl + 5'-phospho-(deoxyribonucleotide)m = (deoxyribonucleotide)n+m + AMP + beta-nicotinamide D-nucleotide.. Functionally, catalyzes the formation of phosphodiester linkages between 5'-phosphoryl and 3'-hydroxyl groups in double-stranded DNA using NAD as a coenzyme and as the energy source for the reaction. This is DNA ligase B from Shigella flexneri.